The sequence spans 404 residues: Photosynthetic reaction center cytochrome c subunit (404 aa).

The N-terminal stretch at 1–22 (MSPAQQLTLPAVIVVASVMLLG) is a signal peptide. Cys-23 carries the N-palmitoyl cysteine lipid modification. A lipid anchor (S-diacylglycerol cysteine) is attached at Cys-23. Heme contacts are provided by Met-94, Cys-107, Cys-110, His-111, Met-130, His-144, Cys-152, Cys-155, His-156, Met-236, Cys-247, Cys-250, His-251, Cys-307, Cys-310, and His-311. Residues 346 to 404 (ASEAAPAAATEAAPEAPAQEVPAAEAVPAAAEPGAAEAAGSVEPAPVEEVAPAPAAQRL) are disordered.

In terms of assembly, component of the photosynthetic reaction center composed of protein subunits L (PufL), M (PufM), H (PuhA) and cytochrome C (PufC). The reaction center interacts with light-harvesting antenna complex LH1. Post-translationally, binds 4 heme groups per subunit.

It is found in the cellular chromatophore membrane. Functionally, the reaction center of purple bacteria contains a tightly bound cytochrome molecule which re-reduces the photo oxidized primary electron donor. This is Photosynthetic reaction center cytochrome c subunit from Thermochromatium tepidum (Chromatium tepidum).